Reading from the N-terminus, the 148-residue chain is Cytochrome c-type biogenesis protein CcmE (148 aa).

Residues 1-7 lie on the Cytoplasmic side of the membrane; it reads MKARNKR. The chain crosses the membrane as a helical; Signal-anchor for type II membrane protein span at residues 8–28; sequence LMLVGGGIALLVAAAALVLSA. Over 29–148 the chain is Periplasmic; it reads FQQNLVFFHT…AHKTATTVQQ (120 aa). Residues His123 and Tyr127 each contribute to the heme site.

This sequence belongs to the CcmE/CycJ family.

It localises to the cell inner membrane. Heme chaperone required for the biogenesis of c-type cytochromes. Transiently binds heme delivered by CcmC and transfers the heme to apo-cytochromes in a process facilitated by CcmF and CcmH. This Azoarcus sp. (strain BH72) protein is Cytochrome c-type biogenesis protein CcmE.